The primary structure comprises 273 residues: Tryptophan synthase alpha chain (273 aa).

Active-site proton acceptor residues include Glu-49 and Asp-60.

Belongs to the TrpA family. In terms of assembly, tetramer of two alpha and two beta chains.

The enzyme catalyses (1S,2R)-1-C-(indol-3-yl)glycerol 3-phosphate + L-serine = D-glyceraldehyde 3-phosphate + L-tryptophan + H2O. Its pathway is amino-acid biosynthesis; L-tryptophan biosynthesis; L-tryptophan from chorismate: step 5/5. Functionally, the alpha subunit is responsible for the aldol cleavage of indoleglycerol phosphate to indole and glyceraldehyde 3-phosphate. This Halorhodospira halophila (strain DSM 244 / SL1) (Ectothiorhodospira halophila (strain DSM 244 / SL1)) protein is Tryptophan synthase alpha chain.